We begin with the raw amino-acid sequence, 318 residues long: Oxygen-evolving enhancer protein 1, chloroplastic (318 aa).

The first 18 residues, 1-18 (MKAVIAVFITLMLTAVVA), serve as a signal peptide directing secretion. A helical membrane pass occupies residues 45 to 65 (AAAAALAALTTLSVISPSFAI).

It belongs to the PsbO family.

It localises to the plastid. Its subcellular location is the chloroplast thylakoid membrane. Functionally, stabilizes the manganese cluster which is the primary site of water splitting. In Chattonella marina var. antiqua (Red tide flagellate), this protein is Oxygen-evolving enhancer protein 1, chloroplastic.